A 509-amino-acid chain; its full sequence is Activin receptor type-1 (509 aa).

Positions 1-20 (MVDGVMILPVLMMMAFPSPS) are cleaved as a signal peptide. Over 21 to 123 (VEDEKPKVNQ…FPGTQNFHLE (103 aa)) the chain is Extracellular. A glycan (N-linked (GlcNAc...) asparagine) is linked at asparagine 102. Residues 124–146 (VGLIILSVVFAVCLLACILGVAL) traverse the membrane as a helical segment. Residues 147–509 (RKFKRRNQER…NSLDKLKTDC (363 aa)) lie on the Cytoplasmic side of the membrane. The 30-residue stretch at 178-207 (STLAELLDHSCTSGSGSGLPFLVQRTVARQ) folds into the GS domain. Residues 208-502 (ITLLECVGKG…KTLTKIDNSL (295 aa)) form the Protein kinase domain. Residues 214-222 (VGKGRYGEV) and lysine 235 each bind ATP. Catalysis depends on aspartate 336, which acts as the Proton acceptor. The residue at position 501 (serine 501) is a Phosphoserine.

Belongs to the protein kinase superfamily. TKL Ser/Thr protein kinase family. TGFB receptor subfamily. In terms of assembly, interacts with FKBP1A. Interacts with FCHO1. Interacts with CLU. Interacts with type II receptors AMHR2 and ACVR2A. Interacts with BMP7. Interacts with BMP9. Interacts with BMP6 (when glycosylated); the interaction may induce HAMP expression. Interacts with TSC22D1/TSC-22. Mg(2+) is required as a cofactor. The cofactor is Mn(2+). As to expression, highly expressed in bone during developmental stages. Expressed in normal parenchymal cells, endothelial cells, fibroblasts and tumor-derived epithelial cells.

The protein resides in the membrane. It catalyses the reaction L-threonyl-[receptor-protein] + ATP = O-phospho-L-threonyl-[receptor-protein] + ADP + H(+). It carries out the reaction L-seryl-[receptor-protein] + ATP = O-phospho-L-seryl-[receptor-protein] + ADP + H(+). Its function is as follows. Bone morphogenetic protein (BMP) type I receptor that is involved in a wide variety of biological processes, including bone, heart, cartilage, nervous, and reproductive system development and regulation. As a type I receptor, forms heterotetrameric receptor complexes with the type II receptors AMHR2, ACVR2A ors ACVR2B. Upon binding of ligands such as BMP7 or BMP9 to the heteromeric complexes, type II receptors transphosphorylate ACVR1 intracellular domain. In turn, ACVR1 kinase domain is activated and subsequently phosphorylates SMAD1/5/8 proteins that transduce the signal. In addition to its role in mediating BMP pathway-specific signaling, suppresses TGFbeta/activin pathway signaling by interfering with the binding of activin to its type II receptor. Besides canonical SMAD signaling, can activate non-canonical pathways such as p38 mitogen-activated protein kinases/MAPKs. May promote the expression of HAMP, potentially via its interaction with BMP6. The protein is Activin receptor type-1 (Acvr1) of Mus musculus (Mouse).